Consider the following 348-residue polypeptide: sn-glycerol-3-phosphate import ATP-binding protein UgpC 3 (348 aa).

The ABC transporter domain occupies 4-234; that stretch reads INIVDVKKNY…PASLFVAGFI (231 aa). Residue 36-43 participates in ATP binding; it reads GPSGCGKS.

It belongs to the ABC transporter superfamily. sn-glycerol-3-phosphate importer (TC 3.A.1.1.3) family. As to quaternary structure, the complex is composed of two ATP-binding proteins (UgpC), two transmembrane proteins (UgpA and UgpE) and a solute-binding protein (UgpB).

Its subcellular location is the cell inner membrane. It catalyses the reaction sn-glycerol 3-phosphate(out) + ATP + H2O = sn-glycerol 3-phosphate(in) + ADP + phosphate + H(+). In terms of biological role, part of the ABC transporter complex UgpBAEC involved in sn-glycerol-3-phosphate (G3P) import. Responsible for energy coupling to the transport system. In Rhizobium etli (strain ATCC 51251 / DSM 11541 / JCM 21823 / NBRC 15573 / CFN 42), this protein is sn-glycerol-3-phosphate import ATP-binding protein UgpC 3.